The sequence spans 65 residues: Hainantoxin-X.3 (65 aa).

The signal sequence occupies residues Met-1 to Ala-20. Positions Glu-21–Arg-37 are excised as a propeptide. 3 cysteine pairs are disulfide-bonded: Cys-39–Cys-56, Cys-46–Cys-59, and Cys-55–Cys-64.

It belongs to the neurotoxin 36 family. 02 subfamily. Expressed by the venom gland.

The protein resides in the secreted. Its function is as follows. Reversibly blocks N-type calcium channels (Cav2.2/CACNA1B) in rat dorsal root ganglion cells. Elicits no toxic symptoms in either vertebrates or invertebrates during a period of 48 hours post-injection, when it was assayed in vivo by direct injection into mice and cockroaches. The sequence is that of Hainantoxin-X.3 from Cyriopagopus hainanus (Chinese bird spider).